Here is a 321-residue protein sequence, read N- to C-terminus: Probable arabinan endo-1,5-alpha-L-arabinosidase A (321 aa).

The first 19 residues, 1 to 19, serve as a signal peptide directing secretion; the sequence is MHPSTFVTTIACLAGLAHG. The active-site Proton acceptor is Asp34. The active-site Proton donor is the Glu200.

Belongs to the glycosyl hydrolase 43 family.

Its subcellular location is the secreted. It carries out the reaction Endohydrolysis of (1-&gt;5)-alpha-arabinofuranosidic linkages in (1-&gt;5)-arabinans.. Its pathway is glycan metabolism; L-arabinan degradation. Endo-1,5-alpha-L-arabinanase involved in degradation of pectin. Its preferred substrate is linear 1,5-alpha-L-arabinan. This Aspergillus clavatus (strain ATCC 1007 / CBS 513.65 / DSM 816 / NCTC 3887 / NRRL 1 / QM 1276 / 107) protein is Probable arabinan endo-1,5-alpha-L-arabinosidase A (abnA).